A 469-amino-acid chain; its full sequence is Swarming motility regulation sensor protein RssA (469 aa).

2 helical membrane passes run 12–32 (IIFQVLAILLLWGLLVAWVKY) and 167–187 (VPLLGILAAIIVTLLFTAYFS). The Histidine kinase domain maps to 245–459 (DAAHELRTPI…GFIIDLPESY (215 aa)). At H248 the chain carries Phosphohistidine; by autocatalysis.

The protein localises to the cell inner membrane. It carries out the reaction ATP + protein L-histidine = ADP + protein N-phospho-L-histidine.. Functionally, member of the two-component regulatory system RssA/RssB involved in regulation of swarming motility which has been shown to be inhibited by saturated fatty acids. RssA/RssB regulates cellular fatty acid composition, hemolysin production and cell surface topography. RssA/RssB negatively regulates the activity of SlhBA. It can also act as a negative regulator for the control of the swarming initiation. This Serratia marcescens protein is Swarming motility regulation sensor protein RssA (rssA).